The chain runs to 56 residues: Large ribosomal subunit protein eL37 (56 aa).

Zn(2+) contacts are provided by cysteine 19, cysteine 22, cysteine 34, and cysteine 37. The C4-type zinc finger occupies 19 to 37; it reads CRRCGSVSFNVHTKQCTSC.

It belongs to the eukaryotic ribosomal protein eL37 family. Zn(2+) is required as a cofactor.

Its function is as follows. Binds to the 23S rRNA. This is Large ribosomal subunit protein eL37 (rpl37e) from Methanosarcina acetivorans (strain ATCC 35395 / DSM 2834 / JCM 12185 / C2A).